The chain runs to 234 residues: MIVLAGLGNPGSQYAGNRHNIGFMALDAIHRRHSFSPWSKKFKAEIADGTLAGEKVLLIKPQTFMNLSGESVGEALRFYKLGPEQLVAIYDELDLLPGKARIKLGGGHGGHNGIKSLDAHCGLNYRRLRLGIGHPGDKSRVQAHVLGDFGKLDAEWLDPLLETLAENADMLVRGEDSQLMNKLALATGTKADEEKPKPAKSHIHQARNGVQPKKLPETGPMAEMLKKMFGPKKD.

Tyr-14 serves as a coordination point for tRNA. The Proton acceptor role is filled by His-19. TRNA is bound by residues Phe-64, Asn-66, and Asn-112. The disordered stretch occupies residues 187–234; that stretch reads TGTKADEEKPKPAKSHIHQARNGVQPKKLPETGPMAEMLKKMFGPKKD.

Belongs to the PTH family. Monomer.

It is found in the cytoplasm. It carries out the reaction an N-acyl-L-alpha-aminoacyl-tRNA + H2O = an N-acyl-L-amino acid + a tRNA + H(+). Hydrolyzes ribosome-free peptidyl-tRNAs (with 1 or more amino acids incorporated), which drop off the ribosome during protein synthesis, or as a result of ribosome stalling. Functionally, catalyzes the release of premature peptidyl moieties from peptidyl-tRNA molecules trapped in stalled 50S ribosomal subunits, and thus maintains levels of free tRNAs and 50S ribosomes. This Allorhizobium ampelinum (strain ATCC BAA-846 / DSM 112012 / S4) (Agrobacterium vitis (strain S4)) protein is Peptidyl-tRNA hydrolase.